The following is a 319-amino-acid chain: Ribonucleoside-diphosphate reductase 2 subunit beta (319 aa).

Fe cation is bound by residues Asp67, Glu98, and His101. Residue Tyr105 is part of the active site. Glu158, Glu192, and His195 together coordinate Fe cation.

The protein belongs to the ribonucleoside diphosphate reductase small chain family. In terms of assembly, tetramer of two alpha and two beta subunits. It depends on Fe cation as a cofactor.

It carries out the reaction a 2'-deoxyribonucleoside 5'-diphosphate + [thioredoxin]-disulfide + H2O = a ribonucleoside 5'-diphosphate + [thioredoxin]-dithiol. Its function is as follows. Provides the precursors necessary for DNA synthesis. Catalyzes the biosynthesis of deoxyribonucleotides from the corresponding ribonucleotides. R2F contains the tyrosyl radical required for catalysis. This is Ribonucleoside-diphosphate reductase 2 subunit beta (nrdF) from Escherichia coli (strain K12).